The sequence spans 436 residues: Homeobox protein PKNOX1 (436 aa).

A disordered region spans residues 24–49 (LKTEQDPNCSEPDVEGVSPPPVGSQT). S33 and S41 each carry phosphoserine. The MEIS N-terminal domain maps to 80–163 (GSEGTTSASF…MNSETLLSGE (84 aa)). A DNA-binding region (homeobox; TALE-type) is located at residues 259-321 (SKNKRGVLPK…NARRRILQPM (63 aa)). A disordered region spans residues 401 to 436 (AEQSEDDSVDSTGDGGAALAPGHLGGLVLENSDSLQ).

This sequence belongs to the TALE/MEIS homeobox family. In terms of assembly, interacts with MN1.

Its subcellular location is the nucleus. In terms of biological role, activates transcription in the presence of PBX1A and HOXA1. The chain is Homeobox protein PKNOX1 from Bos taurus (Bovine).